The sequence spans 326 residues: Biotin synthase (326 aa).

A Radical SAM core domain is found at 51 to 275 (NAVQRSTLLS…MMPTSFVRLS (225 aa)). Residues Cys66, Cys70, and Cys73 each contribute to the [4Fe-4S] cluster site. [2Fe-2S] cluster-binding residues include Cys110, Cys141, Cys201, and Arg273.

This sequence belongs to the radical SAM superfamily. Biotin synthase family. As to quaternary structure, homodimer. It depends on [4Fe-4S] cluster as a cofactor. [2Fe-2S] cluster serves as cofactor.

The enzyme catalyses (4R,5S)-dethiobiotin + (sulfur carrier)-SH + 2 reduced [2Fe-2S]-[ferredoxin] + 2 S-adenosyl-L-methionine = (sulfur carrier)-H + biotin + 2 5'-deoxyadenosine + 2 L-methionine + 2 oxidized [2Fe-2S]-[ferredoxin]. It functions in the pathway cofactor biosynthesis; biotin biosynthesis; biotin from 7,8-diaminononanoate: step 2/2. Its function is as follows. Catalyzes the conversion of dethiobiotin (DTB) to biotin by the insertion of a sulfur atom into dethiobiotin via a radical-based mechanism. The polypeptide is Biotin synthase (Aromatoleum aromaticum (strain DSM 19018 / LMG 30748 / EbN1) (Azoarcus sp. (strain EbN1))).